Here is a 138-residue protein sequence, read N- to C-terminus: Large ribosomal subunit protein bL17 (138 aa).

Belongs to the bacterial ribosomal protein bL17 family. In terms of assembly, part of the 50S ribosomal subunit. Contacts protein L32.

The sequence is that of Large ribosomal subunit protein bL17 from Jannaschia sp. (strain CCS1).